The primary structure comprises 321 residues: Thioredoxin reductase (321 aa).

Residues 11-14 (SGPA), 40-41 (TA), Gln45, Asn54, Cys145, Asp288, and 295-297 (RQA) each bind FAD. The cysteines at positions 142 and 145 are disulfide-linked.

The protein belongs to the class-II pyridine nucleotide-disulfide oxidoreductase family. Homodimer. FAD is required as a cofactor.

It is found in the cytoplasm. The catalysed reaction is [thioredoxin]-dithiol + NADP(+) = [thioredoxin]-disulfide + NADPH + H(+). The chain is Thioredoxin reductase (TRR1) from Debaryomyces hansenii (strain ATCC 36239 / CBS 767 / BCRC 21394 / JCM 1990 / NBRC 0083 / IGC 2968) (Yeast).